The following is a 214-amino-acid chain: Putative nickel/cobalt efflux system MJ1092 (214 aa).

Transmembrane regions (helical) follow at residues 2–22 (VMIM…LHAL), 46–66 (ILLG…LGIL), 79–99 (VHDM…IWII), 116–136 (VITL…AVLL), 149–169 (IYVA…AVAF), and 188–208 (LPLI…AHPI).

The protein belongs to the NiCoT transporter (TC 2.A.52) family.

It is found in the cell membrane. Functionally, efflux system for nickel and cobalt. This chain is Putative nickel/cobalt efflux system MJ1092, found in Methanocaldococcus jannaschii (strain ATCC 43067 / DSM 2661 / JAL-1 / JCM 10045 / NBRC 100440) (Methanococcus jannaschii).